The primary structure comprises 536 residues: Cytochrome P450 78A7 (536 aa).

The helical transmembrane segment at 36–56 (LFLAVVFLSIVTWALAGGGGV) threads the bilayer. C481 is a binding site for heme.

Belongs to the cytochrome P450 family. Heme serves as cofactor.

The protein resides in the membrane. Functionally, functions probably in association with CYP78A5 in regulating relative growth of the shoot apical meristem and plant organs via a non-cell-autonomous signal. This chain is Cytochrome P450 78A7 (CYP78A7), found in Arabidopsis thaliana (Mouse-ear cress).